The sequence spans 173 residues: Peptide deformylase (173 aa).

The Fe cation site is built by cysteine 98 and histidine 140. Glutamate 141 is an active-site residue. Residue histidine 144 participates in Fe cation binding.

Belongs to the polypeptide deformylase family. Fe(2+) is required as a cofactor.

It carries out the reaction N-terminal N-formyl-L-methionyl-[peptide] + H2O = N-terminal L-methionyl-[peptide] + formate. Removes the formyl group from the N-terminal Met of newly synthesized proteins. Requires at least a dipeptide for an efficient rate of reaction. N-terminal L-methionine is a prerequisite for activity but the enzyme has broad specificity at other positions. The sequence is that of Peptide deformylase from Caulobacter sp. (strain K31).